Here is a 150-residue protein sequence, read N- to C-terminus: C-type lectin 16 (150 aa).

Positions Met-1–Ala-27 are cleaved as a signal peptide. Disulfide bonds link Cys-29–Cys-40, Cys-57–Cys-146, and Cys-123–Cys-138. The region spanning Tyr-36 to Glu-147 is the C-type lectin domain.

Belongs to the snaclec family. As to quaternary structure, heteromultimer; disulfide-linked. Expressed by the venom gland.

The protein resides in the secreted. In terms of biological role, interferes with one step of hemostasis (modulation of platelet aggregation, or coagulation cascade, for example). The chain is C-type lectin 16 from Crotalus adamanteus (Eastern diamondback rattlesnake).